Here is a 644-residue protein sequence, read N- to C-terminus: Sodium/hydrogen exchanger 9 (644 aa).

Residues 1–20 are Lumenal-facing; that stretch reads MAGQLRLTSGKDEDHFQHQG. Residues 21–41 traverse the membrane as a helical segment; sequence AVELLAFNFLLILTILTIWLF. Residues 42–45 lie on the Cytoplasmic side of the membrane; that stretch reads KNHR. The chain crosses the membrane as a helical span at residues 46-66; that stretch reads FRFLHETGGAMVYGLIMGLIL. Topologically, residues 67 to 126 are lumenal; it reads RYATAPTDIDSGTVYNCGKLLFSPSTLLVNITDQVYEYKYQREINQHNISPHQGNAILEK. Residues 127-147 traverse the membrane as a helical segment; that stretch reads MTFDPEIFFNVLLPPIIFHAG. Residues 148–164 lie on the Cytoplasmic side of the membrane; sequence YSLKKRHFFQNLGSILT. The chain crosses the membrane as a helical span at residues 165–185; sequence YAFLGTAISCVVIGLIMYGFV. Residues 186–203 are Lumenal-facing; the sequence is KAMVHAGQLKSGDFHFTD. Residues 204 to 224 traverse the membrane as a helical segment; sequence CLFFGSLMSATDPVTVLAIFH. Residues 225 to 235 are Cytoplasmic-facing; it reads ELHVDPDLYTL. The chain crosses the membrane as a helical span at residues 236–256; that stretch reads LFGESVLNDAVAIVLTYSISI. The Lumenal segment spans residues 257–277; it reads YSPKENPNAFDTAAFFQSVGN. A helical membrane pass occupies residues 278 to 298; the sequence is FLGIFAGSFAMGSAYAVVTAL. Residues 299–309 lie on the Cytoplasmic side of the membrane; that stretch reads LTKFTKLREFP. Residues 310–327 traverse the membrane as a helical segment; that stretch reads MLETGLFFLLSWSAFLSA. Over 328-333 the chain is Lumenal; it reads EAAGLT. Residues 334–350 form a helical membrane-spanning segment; that stretch reads GIVAVLFCGVTQAHYTY. The Cytoplasmic segment spans residues 351 to 364; it reads NNLSSDSKLRTKQL. A helical transmembrane segment spans residues 365 to 385; the sequence is FEFMNFLAENVIFCYMGLALF. Thr386 is a topological domain (lumenal). The helical transmembrane segment at 387-407 threads the bilayer; that stretch reads FQNHIFNALFILGAFLAIFVA. The Cytoplasmic segment spans residues 408 to 429; that stretch reads RACNIYPLSFLLNLGRKQKIPW. The chain crosses the membrane as a helical span at residues 430–450; it reads NFQHMMMFSGLRGAIAFALAI. Residues 451–465 lie on the Lumenal side of the membrane; that stretch reads RNTESQPKQMMFTTT. Residues 466-486 form a helical membrane-spanning segment; that stretch reads LLLVFFTVWVFGGGTTPMLTW. The Cytoplasmic portion of the chain corresponds to 487–644; the sequence is LQIRVGVDLD…EQTRGQPQMD (158 aa).

This sequence belongs to the monovalent cation:proton antiporter 1 (CPA1) transporter (TC 2.A.36) family. Homodimer; phosphatidylinositol-4,5-bisphosphate (PIP2) and phosphatidylinositol 3,4,5-trisphosphate (PIP3) could be involved in the dimer stabilization. Interacts (via the C-terminus) with RACK1. Interacts with CHP1. As to expression, expressed in hair bundles and in vestibular hair bundles. Expressed in brain.

It localises to the late endosome membrane. The protein resides in the early endosome membrane. It is found in the recycling endosome membrane. Its subcellular location is the cell membrane. The protein localises to the cytoplasmic vesicle. It localises to the phagosome membrane. The catalysed reaction is Na(+)(in) + H(+)(out) = Na(+)(out) + H(+)(in). It catalyses the reaction K(+)(in) + H(+)(out) = K(+)(out) + H(+)(in). Endosomal Na(+), K(+)/H(+) antiporter. Mediates the electroneutral exchange of endosomal luminal H(+) for a cytosolic Na(+) or K(+). By facilitating proton efflux, SLC9A9 counteracts the acidity generated by vacuolar (V)-ATPase, thereby limiting luminal acidification. Regulates organellar pH and consequently, endosome maturation and endocytic trafficking of plasma membrane receptors and neurotransporters. Promotes the recycling of transferrin receptors back to the cell surface to facilitate additional iron uptake in the brain. Regulates synaptic transmission by regulating the luminal pH of axonal endosomes. Regulates phagosome lumenal pH, thus affecting phagosome maturation, and consequently, microbicidal activity in macrophages. Can also be active at the cell surface of specialized cells, e.g., in the inner ear hair bundles uses the high K(+) of the endolymph to regulate intracelular pH. The chain is Sodium/hydrogen exchanger 9 (Slc9a9) from Rattus norvegicus (Rat).